A 487-amino-acid chain; its full sequence is Schwannomin-interacting protein 1 (487 aa).

Disordered regions lie at residues 1–74 (MERS…VSAL), 88–221 (VIDE…PVPP), 236–260 (FREQ…NERE), and 308–354 (SGSD…SLDD). The segment covering 14-27 (DQGKHSDSDYREDG) has biased composition (basic and acidic residues). Residues 32–67 (SDAGSSSSSSRASSQSNSTKVTPCSECKSSSSPGGS) show a composition bias toward low complexity. Positions 92–106 (WAPEEDGEEEEEEDE) are enriched in acidic residues. Composition is skewed to basic and acidic residues over residues 107 to 123 (RDQR…REPG) and 153 to 162 (HQHDPQDLRH). Ser-117 carries the post-translational modification Phosphoserine. Residues 242 to 255 (RNQGQARTNSTSAQ) show a composition bias toward polar residues. Over residues 309–323 (GSDKDSDADDSKTET) the composition is skewed to basic and acidic residues. The span at 324–335 (SLDTPLSPMSKQ) shows a compositional bias: polar residues. Residues 344-354 (TTEEESESLDD) show a composition bias toward acidic residues. Residues 424–458 (IGQLQVIVNDLHSQIESLNEELVQLLLIRDELHTE) are a coiled coil.

The protein belongs to the SCHIP1 family. In terms of assembly, homooligomer (via coiled coil domain). Interacts with NF2; the interaction is direct. Interacts with ANK3. As to expression, preferentially expressed in brain, skeletal muscles and heart. Also expressed in detected in pancreas, kidney, liver, lung, and placenta.

It is found in the cytoplasm. The sequence is that of Schwannomin-interacting protein 1 from Homo sapiens (Human).